The chain runs to 243 residues: Eukaryotic translation initiation factor 4E-2 (243 aa).

It belongs to the eukaryotic initiation factor 4E family. As to quaternary structure, eIF4F is a multi-subunit complex, the composition of which varies with external and internal environmental conditions. It is composed of at least eIF4A, eIF4E and eIF4G. eIF4E is also known to interact with other partners.

Recognizes and binds the 7-methylguanosine-containing mRNA cap during an early step in the initiation of protein synthesis and facilitates ribosome binding by inducing the unwinding of the mRNAs secondary structures. The polypeptide is Eukaryotic translation initiation factor 4E-2 (tif452) (Schizosaccharomyces pombe (strain 972 / ATCC 24843) (Fission yeast)).